The primary structure comprises 631 residues: tRNA uridine 5-carboxymethylaminomethyl modification enzyme MnmG (631 aa).

Residues 13–18, Val-125, and Ser-180 contribute to the FAD site; that span reads GGGHAG. 273-287 provides a ligand contact to NAD(+); it reads GPRYCPSIEDKVNRY. An FAD-binding site is contributed by Gln-370.

It belongs to the MnmG family. In terms of assembly, homodimer. Heterotetramer of two MnmE and two MnmG subunits. It depends on FAD as a cofactor.

It is found in the cytoplasm. NAD-binding protein involved in the addition of a carboxymethylaminomethyl (cmnm) group at the wobble position (U34) of certain tRNAs, forming tRNA-cmnm(5)s(2)U34. The protein is tRNA uridine 5-carboxymethylaminomethyl modification enzyme MnmG of Alcanivorax borkumensis (strain ATCC 700651 / DSM 11573 / NCIMB 13689 / SK2).